The following is a 128-amino-acid chain: Small ribosomal subunit protein uS11 (128 aa).

Belongs to the universal ribosomal protein uS11 family. Part of the 30S ribosomal subunit. Interacts with proteins S7 and S18. Binds to IF-3.

Functionally, located on the platform of the 30S subunit, it bridges several disparate RNA helices of the 16S rRNA. Forms part of the Shine-Dalgarno cleft in the 70S ribosome. The protein is Small ribosomal subunit protein uS11 of Methylococcus capsulatus (strain ATCC 33009 / NCIMB 11132 / Bath).